The primary structure comprises 124 residues: Large ribosomal subunit protein bL12 (124 aa).

It belongs to the bacterial ribosomal protein bL12 family. In terms of assembly, homodimer. Part of the ribosomal stalk of the 50S ribosomal subunit. Forms a multimeric L10(L12)X complex, where L10 forms an elongated spine to which 2 to 4 L12 dimers bind in a sequential fashion. Binds GTP-bound translation factors.

Its function is as follows. Forms part of the ribosomal stalk which helps the ribosome interact with GTP-bound translation factors. Is thus essential for accurate translation. The polypeptide is Large ribosomal subunit protein bL12 (Anaeromyxobacter dehalogenans (strain 2CP-C)).